The sequence spans 316 residues: Apolipoprotein E (316 aa).

A signal peptide spans 1–18; it reads MKALWAVLVVTLLAGCLA. 8 tandem repeats follow at residues 76-97, 98-119, 120-141, 142-163, 164-185, 186-207, 208-229, and 230-251. The interval 76–251 is 8 X 22 AA approximate tandem repeats; that stretch reads VLMEDTMTEL…RLEEVREQME (176 aa). Methionine sulfoxide is present on methionine 139. Serine 143 is modified (phosphoserine). Residues 154–164 are LDL and other lipoprotein receptors binding; sequence HLRKLRKRLMR. 158-161 lines the heparin pocket; that stretch reads LRKR. The tract at residues 206–286 is lipid-binding and lipoprotein association; that stretch reads TANLGAGAGK…GWFEPLVEDM (81 aa). 225-232 lines the heparin pocket; it reads GARIRGRL. Residues 262-316 form a homooligomerization region; that stretch reads QQMRLQAEIFQARLKGWFEPLVEDMQRQWANLVEKIQASVAANPIPPSSVPQESQ. A specificity for association with VLDL region spans residues 274–286; it reads RLKGWFEPLVEDM.

This sequence belongs to the apolipoprotein A1/A4/E family. Homotetramer. May interact with ABCA1; functionally associated with ABCA1 in the biogenesis of HDLs. May interact with APP/A4 amyloid-beta peptide; the interaction is extremely stable in vitro but its physiological significance is unclear. May interact with MAPT. May interact with MAP2. In the cerebrospinal fluid, interacts with secreted SORL1. Interacts with PMEL; this allows the loading of PMEL luminal fragment on ILVs to induce fibril nucleation. APOE exists as multiple glycosylated and sialylated glycoforms within cells and in plasma. The extent of glycosylation and sialylation are tissue and context specific. Post-translationally, glycated in plasma VLDL. In terms of processing, phosphorylated by FAM20C in the extracellular medium.

The protein localises to the secreted. The protein resides in the extracellular space. Its subcellular location is the extracellular matrix. It localises to the extracellular vesicle. It is found in the endosome. The protein localises to the multivesicular body. In terms of biological role, APOE is an apolipoprotein, a protein associating with lipid particles, that mainly functions in lipoprotein-mediated lipid transport between organs via the plasma and interstitial fluids. APOE is a core component of plasma lipoproteins and is involved in their production, conversion and clearance. Apolipoproteins are amphipathic molecules that interact both with lipids of the lipoprotein particle core and the aqueous environment of the plasma. As such, APOE associates with chylomicrons, chylomicron remnants, very low density lipoproteins (VLDL) and intermediate density lipoproteins (IDL) but shows a preferential binding to high-density lipoproteins (HDL). It also binds a wide range of cellular receptors including the LDL receptor/LDLR, the LDL receptor-related proteins LRP1, LRP2 and LRP8 and the very low-density lipoprotein receptor/VLDLR that mediate the cellular uptake of the APOE-containing lipoprotein particles. Finally, APOE also has a heparin-binding activity and binds heparan-sulfate proteoglycans on the surface of cells, a property that supports the capture and the receptor-mediated uptake of APOE-containing lipoproteins by cells. A main function of APOE is to mediate lipoprotein clearance through the uptake of chylomicrons, VLDLs, and HDLs by hepatocytes. APOE is also involved in the biosynthesis by the liver of VLDLs as well as their uptake by peripheral tissues ensuring the delivery of triglycerides and energy storage in muscle, heart and adipose tissues. By participating in the lipoprotein-mediated distribution of lipids among tissues, APOE plays a critical role in plasma and tissues lipid homeostasis. APOE is also involved in two steps of reverse cholesterol transport, the HDLs-mediated transport of cholesterol from peripheral tissues to the liver, and thereby plays an important role in cholesterol homeostasis. First, it is functionally associated with ABCA1 in the biogenesis of HDLs in tissues. Second, it is enriched in circulating HDLs and mediates their uptake by hepatocytes. APOE also plays an important role in lipid transport in the central nervous system, regulating neuron survival and sprouting. This is Apolipoprotein E (Apoe) from Onychomys torridus (Southern grasshopper mouse).